The following is a 237-amino-acid chain: Protein ULTRAPETALA 1 (237 aa).

Positions 18-116 (EELQEMSGVN…SKTVLLKYYN (99 aa)) constitute an SAND domain. The CW-type zinc-finger motif lies at 133–191 (VCHRDEFVGCNDCGKERRFRLRSRDECRLHHNAMGDPNWKCSDFPYDKITCEEEEERGS).

Interacts with HHO5. Associates with ATX1 for trimethylating 'Lys-4' on histone H3 (H3K4me3) at flower MADS box gene loci. Expressed at low levels in seedlings, roots, shoots, leaves, stems, inflorescences, pollen, flowers and siliques, with highest levels dividing tissues including inflorescence.

It is found in the cytoplasm. The protein localises to the nucleus. Functionally, putative transcription factor that acts as a key negative regulator of cell accumulation in shoot and floral meristems. Negatively regulates the size of the WUSCHEL (WUS)-expressing organizing center in inflorescence meristems. May act by down-regulating expression of WUS. Acts as an antirepressor that counteracts EMF1 action through modulation of trimethylated 'Lys-4' on histone H3 (H3K4me3) marks on target gene loci (including genes involved in salt stress response and flower development). Collaboratively with RBL and CYP40/SQN, influences floral meristem (FM) determinacy in an AGAMOUS and SUPERMAN-dependent manner, thus contributing to the floral developmental homeostasis. The sequence is that of Protein ULTRAPETALA 1 from Arabidopsis thaliana (Mouse-ear cress).